The chain runs to 392 residues: Histidinol-phosphate aminotransferase (392 aa).

Residues 1–24 (MSAVLKDPIPAPGRPESTRPEPRP) are disordered. N6-(pyridoxal phosphate)lysine is present on K236.

It belongs to the class-II pyridoxal-phosphate-dependent aminotransferase family. Histidinol-phosphate aminotransferase subfamily. As to quaternary structure, homodimer. Pyridoxal 5'-phosphate is required as a cofactor.

It catalyses the reaction L-histidinol phosphate + 2-oxoglutarate = 3-(imidazol-4-yl)-2-oxopropyl phosphate + L-glutamate. Its pathway is amino-acid biosynthesis; L-histidine biosynthesis; L-histidine from 5-phospho-alpha-D-ribose 1-diphosphate: step 7/9. This Xanthobacter autotrophicus (strain ATCC BAA-1158 / Py2) protein is Histidinol-phosphate aminotransferase.